A 390-amino-acid chain; its full sequence is Succinate--CoA ligase [ADP-forming] subunit beta (390 aa).

One can recognise an ATP-grasp domain in the interval 9 to 244; the sequence is KEIFRKYGVP…LDEEEPTEVE (236 aa). ATP contacts are provided by residues lysine 46, 53 to 55, glutamate 99, alanine 102, and glutamate 107; that span reads GRG. 2 residues coordinate Mg(2+): asparagine 199 and aspartate 213. Substrate is bound by residues asparagine 264 and 321–323; that span reads GIV.

It belongs to the succinate/malate CoA ligase beta subunit family. As to quaternary structure, heterotetramer of two alpha and two beta subunits. Mg(2+) serves as cofactor.

The catalysed reaction is succinate + ATP + CoA = succinyl-CoA + ADP + phosphate. It catalyses the reaction GTP + succinate + CoA = succinyl-CoA + GDP + phosphate. It functions in the pathway carbohydrate metabolism; tricarboxylic acid cycle; succinate from succinyl-CoA (ligase route): step 1/1. Its function is as follows. Succinyl-CoA synthetase functions in the citric acid cycle (TCA), coupling the hydrolysis of succinyl-CoA to the synthesis of either ATP or GTP and thus represents the only step of substrate-level phosphorylation in the TCA. The beta subunit provides nucleotide specificity of the enzyme and binds the substrate succinate, while the binding sites for coenzyme A and phosphate are found in the alpha subunit. The chain is Succinate--CoA ligase [ADP-forming] subunit beta from Nautilia profundicola (strain ATCC BAA-1463 / DSM 18972 / AmH).